The primary structure comprises 152 residues: Ribosome maturation factor RimP (152 aa).

Belongs to the RimP family.

The protein resides in the cytoplasm. Its function is as follows. Required for maturation of 30S ribosomal subunits. The sequence is that of Ribosome maturation factor RimP from Burkholderia lata (strain ATCC 17760 / DSM 23089 / LMG 22485 / NCIMB 9086 / R18194 / 383).